Reading from the N-terminus, the 360-residue chain is 3-dehydroquinate synthase (360 aa).

NAD(+) contacts are provided by residues 70 to 75 (DGESLK), 128 to 129 (TT), lysine 141, and lysine 150. Zn(2+) contacts are provided by glutamate 182, histidine 243, and histidine 259.

This sequence belongs to the sugar phosphate cyclases superfamily. Dehydroquinate synthase family. NAD(+) is required as a cofactor. Co(2+) serves as cofactor. It depends on Zn(2+) as a cofactor.

It is found in the cytoplasm. The enzyme catalyses 7-phospho-2-dehydro-3-deoxy-D-arabino-heptonate = 3-dehydroquinate + phosphate. It participates in metabolic intermediate biosynthesis; chorismate biosynthesis; chorismate from D-erythrose 4-phosphate and phosphoenolpyruvate: step 2/7. Functionally, catalyzes the conversion of 3-deoxy-D-arabino-heptulosonate 7-phosphate (DAHP) to dehydroquinate (DHQ). This is 3-dehydroquinate synthase from Thermoplasma volcanium (strain ATCC 51530 / DSM 4299 / JCM 9571 / NBRC 15438 / GSS1).